The chain runs to 180 residues: dCTP deaminase, dUMP-forming (180 aa).

Residues 96 to 101, Asp-113, 121 to 123, Gln-142, Tyr-156, and Gln-163 each bind dCTP; these read RSSLGR and TLE. Residue Glu-123 is the Proton donor/acceptor of the active site.

Belongs to the dCTP deaminase family. In terms of assembly, homotrimer.

It carries out the reaction dCTP + 2 H2O = dUMP + NH4(+) + diphosphate. It functions in the pathway pyrimidine metabolism; dUMP biosynthesis; dUMP from dCTP: step 1/1. Functionally, bifunctional enzyme that catalyzes both the deamination of dCTP to dUTP and the hydrolysis of dUTP to dUMP without releasing the toxic dUTP intermediate. The chain is dCTP deaminase, dUMP-forming from Aquifex aeolicus (strain VF5).